A 93-amino-acid chain; its full sequence is DNA/RNA-binding protein Alba 2 (93 aa).

This sequence belongs to the histone-like Alba family.

It is found in the cytoplasm. It localises to the chromosome. Its function is as follows. Binds double-stranded DNA tightly but without sequence specificity. Involved in DNA compaction. The polypeptide is DNA/RNA-binding protein Alba 2 (Methanopyrus kandleri (strain AV19 / DSM 6324 / JCM 9639 / NBRC 100938)).